The primary structure comprises 282 residues: Large ribosomal subunit protein uL2 (282 aa).

2 disordered regions span residues 31–55 (KRLT…RHIG) and 223–282 (LAMN…NTQR). 2 stretches are compositionally biased toward basic residues: residues 34 to 55 (TKPV…RHIG) and 270 to 282 (VTRR…NTQR).

It belongs to the universal ribosomal protein uL2 family. In terms of assembly, part of the 50S ribosomal subunit. Forms a bridge to the 30S subunit in the 70S ribosome.

Functionally, one of the primary rRNA binding proteins. Required for association of the 30S and 50S subunits to form the 70S ribosome, for tRNA binding and peptide bond formation. It has been suggested to have peptidyltransferase activity; this is somewhat controversial. Makes several contacts with the 16S rRNA in the 70S ribosome. This is Large ribosomal subunit protein uL2 from Anaeromyxobacter dehalogenans (strain 2CP-C).